The chain runs to 125 residues: Glycine cleavage system H protein (125 aa).

The 83-residue stretch at 21–103 (SVTIGISNQA…YSAGWIVKIK (83 aa)) folds into the Lipoyl-binding domain. The residue at position 62 (Lys-62) is an N6-lipoyllysine.

Belongs to the GcvH family. As to quaternary structure, the glycine cleavage system is composed of four proteins: P, T, L and H. (R)-lipoate serves as cofactor.

Its function is as follows. The glycine cleavage system catalyzes the degradation of glycine. The H protein shuttles the methylamine group of glycine from the P protein to the T protein. The sequence is that of Glycine cleavage system H protein from Psychromonas ingrahamii (strain DSM 17664 / CCUG 51855 / 37).